The primary structure comprises 93 residues: Cell division topological specificity factor (93 aa).

This sequence belongs to the MinE family.

Its function is as follows. Prevents the cell division inhibition by proteins MinC and MinD at internal division sites while permitting inhibition at polar sites. This ensures cell division at the proper site by restricting the formation of a division septum at the midpoint of the long axis of the cell. This is Cell division topological specificity factor from Methylococcus capsulatus (strain ATCC 33009 / NCIMB 11132 / Bath).